Here is a 780-residue protein sequence, read N- to C-terminus: Calpain clp-1 (780 aa).

The segment covering 269-282 has biased composition (basic and acidic residues); sequence DVDPFVRPGPDPDR. The tract at residues 269 to 300 is disordered; sequence DVDPFVRPGPDPDRGGGGSGPSPISPRPTTEP. Residues 316 to 611 enclose the Calpain catalytic domain; it reads LFEDPQFLAN…FEKMEICNLG (296 aa). Catalysis depends on residues C371, H527, and N551.

The protein belongs to the peptidase C2 family. As to expression, expressed in muscle and neuronal tissues. Expressed in the ventral and dorsal nerve cord, intestinal and hypodermal tissues.

Its subcellular location is the cytoplasm. It localises to the myofibril. It is found in the sarcomere. The protein localises to the m line. Functionally, calcium-regulated non-lysosomal thiol-protease which catalyzes limited proteolysis of substrates. Required for assembly and maintenance of integrin attachment complexes which are essential for maintenance of adult muscle. Proteolytic activity is activated in response to increased intracellular Ca(2+) levels during cell degeneration and promotes necrotic cell death. This chain is Calpain clp-1, found in Caenorhabditis elegans.